Here is a 288-residue protein sequence, read N- to C-terminus: Energy-coupling factor transporter ATP-binding protein EcfA2 (288 aa).

The ABC transporter domain maps to 3–246 (IKLEQLGYCY…PDELVDLGLS (244 aa)). 40 to 47 (GHTGSGKS) contributes to the ATP binding site.

Belongs to the ABC transporter superfamily. Energy-coupling factor EcfA family. As to quaternary structure, forms a stable energy-coupling factor (ECF) transporter complex composed of 2 membrane-embedded substrate-binding proteins (S component), 2 ATP-binding proteins (A component) and 2 transmembrane proteins (T component).

The protein resides in the cell membrane. ATP-binding (A) component of a common energy-coupling factor (ECF) ABC-transporter complex. Unlike classic ABC transporters this ECF transporter provides the energy necessary to transport a number of different substrates. The polypeptide is Energy-coupling factor transporter ATP-binding protein EcfA2 (Listeria monocytogenes serotype 4b (strain F2365)).